A 146-amino-acid polypeptide reads, in one-letter code: D-aminoacyl-tRNA deacylase (146 aa).

A Gly-cisPro motif, important for rejection of L-amino acids motif is present at residues 138 to 139 (GP).

It belongs to the DTD family. In terms of assembly, homodimer.

It is found in the cytoplasm. The enzyme catalyses glycyl-tRNA(Ala) + H2O = tRNA(Ala) + glycine + H(+). It carries out the reaction a D-aminoacyl-tRNA + H2O = a tRNA + a D-alpha-amino acid + H(+). An aminoacyl-tRNA editing enzyme that deacylates mischarged D-aminoacyl-tRNAs. Also deacylates mischarged glycyl-tRNA(Ala), protecting cells against glycine mischarging by AlaRS. Acts via tRNA-based rather than protein-based catalysis; rejects L-amino acids rather than detecting D-amino acids in the active site. By recycling D-aminoacyl-tRNA to D-amino acids and free tRNA molecules, this enzyme counteracts the toxicity associated with the formation of D-aminoacyl-tRNA entities in vivo and helps enforce protein L-homochirality. This chain is D-aminoacyl-tRNA deacylase, found in Xanthomonas oryzae pv. oryzae (strain MAFF 311018).